The following is a 327-amino-acid chain: Vacuolar protein sorting-associated protein 26A (327 aa).

The interval 306–327 is disordered; it reads RTNFHQRFESPESQASAEQPEM. Serine 315 carries the post-translational modification Phosphoserine. Positions 316–327 are enriched in polar residues; sequence PESQASAEQPEM.

It belongs to the VPS26 family. In terms of assembly, component of the heterotrimeric retromer cargo-selective complex (CSC), also described as vacuolar protein sorting subcomplex (VPS), formed by VPS26 (VPS26A or VPS26B), VPS29 and VPS35. The CSC has a highly elongated structure with VPS26 and VPS29 binding independently at opposite distal ends of VPS35 as central platform. The CSC is believed to associate with variable sorting nexins to form functionally distinct retromer complex variants. The originally described retromer complex (also called SNX-BAR retromer) is a pentamer containing the CSC and a heterodimeric membrane-deforming subcomplex formed between SNX1 or SNX2 and SNX5 or SNX6 (also called SNX-BAR subcomplex); the respective CSC and SNX-BAR subcomplexes associate with low affinity. The CSC associates with SNX3 to form a SNX3-retromer complex. The CSC associates with SNX27, the WASH complex and the SNX-BAR subcomplex to form the SNX27-retromer complex. Interacts with VPS29, VPS35, SNX27, SNX1, SNX2, SNX5, SNX6, SNX3, RAB7A, ECPAS, EHD1, WASHC5, SORL1.

It is found in the cytoplasm. It localises to the endosome membrane. Its subcellular location is the early endosome. Acts as a component of the retromer cargo-selective complex (CSC). The CSC is believed to be the core functional component of retromer or respective retromer complex variants acting to prevent missorting of selected transmembrane cargo proteins into the lysosomal degradation pathway. The recruitment of the CSC to the endosomal membrane involves RAB7A and SNX3. The SNX-BAR retromer mediates retrograde transport of cargo proteins from endosomes to the trans-Golgi network (TGN) and is involved in endosome-to-plasma membrane transport for cargo protein recycling. The SNX3-retromer mediates the retrograde endosome-to-TGN transport of WLS distinct from the SNX-BAR retromer pathway. The SNX27-retromer is believed to be involved in endosome-to-plasma membrane trafficking and recycling of a broad spectrum of cargo proteins. The CSC complex seems to act as recruitment hub for other proteins, such as the WASH complex and TBC1D5. Required for retrograde transport of lysosomal enzyme receptor IGF2R. Required to regulate transcytosis of the polymeric immunoglobulin receptor (pIgR-pIgA). Required for the endosomal localization of WASHC2 (indicative for the WASH complex). Required for the endosomal localization of TBC1D5. Mediates retromer cargo recognition of SORL1 and is involved in trafficking of SORL1 implicated in sorting and processing of APP. Involved in retromer-independent lysosomal sorting of F2R. Involved in recycling of ADRB2. Acts redundantly with VSP26B in SNX-27 mediated endocytic recycling of SLC2A1/GLUT1. Enhances the affinity of SNX27 for PDZ-binding motifs in cargo proteins. The chain is Vacuolar protein sorting-associated protein 26A (Vps26a) from Rattus norvegicus (Rat).